Consider the following 431-residue polypeptide: Glutamate-1-semialdehyde 2,1-aminomutase (431 aa).

An N6-(pyridoxal phosphate)lysine modification is found at K269.

The protein belongs to the class-III pyridoxal-phosphate-dependent aminotransferase family. HemL subfamily. In terms of assembly, homodimer. It depends on pyridoxal 5'-phosphate as a cofactor.

Its subcellular location is the cytoplasm. It catalyses the reaction (S)-4-amino-5-oxopentanoate = 5-aminolevulinate. It participates in porphyrin-containing compound metabolism; protoporphyrin-IX biosynthesis; 5-aminolevulinate from L-glutamyl-tRNA(Glu): step 2/2. In Francisella tularensis subsp. tularensis (strain SCHU S4 / Schu 4), this protein is Glutamate-1-semialdehyde 2,1-aminomutase.